A 360-amino-acid chain; its full sequence is Alpha-N-acetyl-neuraminyl-2,3-beta-galactosyl-1,3-N-acetyl-galactosaminide alpha-2,6-sialyltransferase (360 aa).

Residues 1–71 (MEHVVTCWRL…PGRLLLLTLC (71 aa)) lie on the Cytoplasmic side of the membrane. Residues 72-94 (ILTFSAVCVFLCCWACLPLCLAT) traverse the membrane as a helical; Signal-anchor for type II membrane protein segment. The Lumenal segment spans residues 95 to 360 (CLDRHLPAAP…VFAHPSWRAK (266 aa)). Cys134 and Cys283 are joined by a disulfide. N-linked (GlcNAc...) asparagine glycosylation is present at Asn193.

This sequence belongs to the glycosyltransferase 29 family. In terms of tissue distribution, high expression in brain and colon and to a lesser extent in lung, heart, kidney, spleen and thymus.

It localises to the golgi apparatus membrane. It catalyses the reaction an alpha-Neu5Ac-(2-&gt;3)-beta-D-Gal-(1-&gt;3)-D-GlcNAc derivative + CMP-N-acetyl-beta-neuraminate = an alpha-Neu5Ac-(2-&gt;3)-beta-D-Gal-(1-&gt;3)-[alpha-Neu5Ac-(2-&gt;6)]-D-GlcNAc derivative + CMP + H(+). The enzyme catalyses N-acetyl-alpha-neuraminosyl-(2-&gt;3)-beta-D-galactosyl-(1-&gt;3)-N-acetyl-D-galactosamine + CMP-N-acetyl-beta-neuraminate = N-acetyl-alpha-neuraminosyl-(2-&gt;3)-beta-D-galactosyl-(1-&gt;3)-[N-acetyl-alpha-neuraminosyl-(2-&gt;6)]-N-acetyl-D-galactosamine + CMP + H(+). It carries out the reaction a ganglioside GM1b (d18:1(4E)) + CMP-N-acetyl-beta-neuraminate = a ganglioside GD1alpha (d18:1(4E)) + CMP + H(+). The catalysed reaction is 3-O-[alpha-Neu5Ac-(2-&gt;3)-beta-D-Gal-(1-&gt;3)-alpha-D-GalNAc]-L-Ser-[protein] + CMP-N-acetyl-beta-neuraminate = a 3-O-{alpha-Neu5Ac-(2-&gt;3)-beta-D-Gal-(1-&gt;3)-[alpha-Neu5Ac-(2-&gt;6)]-alpha-D-GalNAc}-L-seryl-[protein] + CMP + H(+). It catalyses the reaction 3-O-[alpha-Neu5Ac-(2-&gt;3)-beta-D-Gal-(1-&gt;3)-alpha-D-GalNAc]-L-Thr-[protein] + CMP-N-acetyl-beta-neuraminate = a 3-O-{alpha-Neu5Ac-(2-&gt;3)-beta-D-Gal-(1-&gt;3)-[alpha-Neu5Ac-(2-&gt;6)]-alpha-D-GalNAc}-L-threonyl-[protein] + CMP + H(+). Its pathway is protein modification; protein glycosylation. It functions in the pathway glycolipid biosynthesis. Transfers the sialyl group (N-acetyl-alpha-neuraminyl or NeuAc) from CMP-NeuAc to the GalNAc residue on the NeuAc-alpha-2,3-Gal-beta-1,3-GalNAc sequence of glycoproteins and glycolipids forming an alpha-2,6-linkage. Produces branched type disialyl structures by transfer of a sialyl group onto a GalNAc residue inside the backbone core chains. Prefers O-glycans to glycoproteins or glycolipids. The protein is Alpha-N-acetyl-neuraminyl-2,3-beta-galactosyl-1,3-N-acetyl-galactosaminide alpha-2,6-sialyltransferase (St6galnac4) of Mus musculus (Mouse).